The primary structure comprises 306 residues: Non-homologous end joining protein Ku 2 (306 aa).

A Ku domain is found at 21–206; it reads ISFGLVNIGV…EVSKQEIDMA (186 aa). The segment at 233–306 is disordered; it reads LIDAKTKGTK…GSRDKTRKRA (74 aa). Residues 274 to 290 are compositionally biased toward basic residues; sequence RTSRRKTTASASRRRSS. Residues 291 to 300 show a composition bias toward basic and acidic residues; that stretch reads SNREKTGSRD.

The protein belongs to the prokaryotic Ku family. As to quaternary structure, homodimer. Interacts with LigD.

With LigD forms a non-homologous end joining (NHEJ) DNA repair enzyme, which repairs dsDNA breaks with reduced fidelity. Binds linear dsDNA with 5'- and 3'- overhangs but not closed circular dsDNA nor ssDNA. Recruits and stimulates the ligase activity of LigD. The sequence is that of Non-homologous end joining protein Ku 2 from Saccharopolyspora erythraea (strain ATCC 11635 / DSM 40517 / JCM 4748 / NBRC 13426 / NCIMB 8594 / NRRL 2338).